Consider the following 236-residue polypeptide: Small ribosomal subunit protein uS2c (236 aa).

Belongs to the universal ribosomal protein uS2 family.

It localises to the plastid. The protein localises to the chloroplast. The chain is Small ribosomal subunit protein uS2c (rps2) from Nandina domestica (Heavenly bamboo).